Reading from the N-terminus, the 207-residue chain is Large ribosomal subunit protein uL4 (207 aa).

Residues H49–I78 are disordered.

The protein belongs to the universal ribosomal protein uL4 family. As to quaternary structure, part of the 50S ribosomal subunit.

Its function is as follows. One of the primary rRNA binding proteins, this protein initially binds near the 5'-end of the 23S rRNA. It is important during the early stages of 50S assembly. It makes multiple contacts with different domains of the 23S rRNA in the assembled 50S subunit and ribosome. Functionally, forms part of the polypeptide exit tunnel. In Streptococcus thermophilus (strain CNRZ 1066), this protein is Large ribosomal subunit protein uL4.